Reading from the N-terminus, the 267-residue chain is Indole-3-glycerol phosphate synthase (267 aa).

This sequence belongs to the TrpC family.

The enzyme catalyses 1-(2-carboxyphenylamino)-1-deoxy-D-ribulose 5-phosphate + H(+) = (1S,2R)-1-C-(indol-3-yl)glycerol 3-phosphate + CO2 + H2O. The protein operates within amino-acid biosynthesis; L-tryptophan biosynthesis; L-tryptophan from chorismate: step 4/5. The chain is Indole-3-glycerol phosphate synthase from Dichelobacter nodosus (strain VCS1703A).